The primary structure comprises 131 residues: Small ribosomal subunit protein uS8 (131 aa).

Belongs to the universal ribosomal protein uS8 family. As to quaternary structure, part of the 30S ribosomal subunit. Contacts proteins S5 and S12.

One of the primary rRNA binding proteins, it binds directly to 16S rRNA central domain where it helps coordinate assembly of the platform of the 30S subunit. This chain is Small ribosomal subunit protein uS8, found in Sorangium cellulosum (strain So ce56) (Polyangium cellulosum (strain So ce56)).